The following is a 524-amino-acid chain: Ribose import ATP-binding protein RbsA (524 aa).

ABC transporter domains lie at leucine 17–isoleucine 252 and isoleucine 263–valine 505. Glycine 49–serine 56 provides a ligand contact to ATP.

Belongs to the ABC transporter superfamily. Ribose importer (TC 3.A.1.2.1) family. The complex is composed of an ATP-binding protein (RbsA), two transmembrane proteins (RbsC) and a solute-binding protein (RbsB).

The protein resides in the cell membrane. The catalysed reaction is D-ribose(out) + ATP + H2O = D-ribose(in) + ADP + phosphate + H(+). Functionally, part of the ABC transporter complex RbsABC involved in ribose import. Responsible for energy coupling to the transport system. This chain is Ribose import ATP-binding protein RbsA, found in Corynebacterium glutamicum (strain ATCC 13032 / DSM 20300 / JCM 1318 / BCRC 11384 / CCUG 27702 / LMG 3730 / NBRC 12168 / NCIMB 10025 / NRRL B-2784 / 534).